The primary structure comprises 259 residues: Cytochrome c oxidase subunit 3 (259 aa).

Transmembrane regions (helical) follow at residues 13-33, 36-56, 80-100, 125-145, 154-174, 195-215, and 237-257; these read PWPL…TSWF, HGFI…FQWW, GMVL…WAYF, FQIP…VTWA, HAEA…FTLL, FFVA…FLLI, and AWYW…IYWW.

This sequence belongs to the cytochrome c oxidase subunit 3 family. Component of the cytochrome c oxidase (complex IV, CIV), a multisubunit enzyme composed of a catalytic core of 3 subunits and several supernumerary subunits. The complex exists as a monomer or a dimer and forms supercomplexes (SCs) in the inner mitochondrial membrane with ubiquinol-cytochrome c oxidoreductase (cytochrome b-c1 complex, complex III, CIII).

The protein localises to the mitochondrion inner membrane. It catalyses the reaction 4 Fe(II)-[cytochrome c] + O2 + 8 H(+)(in) = 4 Fe(III)-[cytochrome c] + 2 H2O + 4 H(+)(out). Functionally, component of the cytochrome c oxidase, the last enzyme in the mitochondrial electron transport chain which drives oxidative phosphorylation. The respiratory chain contains 3 multisubunit complexes succinate dehydrogenase (complex II, CII), ubiquinol-cytochrome c oxidoreductase (cytochrome b-c1 complex, complex III, CIII) and cytochrome c oxidase (complex IV, CIV), that cooperate to transfer electrons derived from NADH and succinate to molecular oxygen, creating an electrochemical gradient over the inner membrane that drives transmembrane transport and the ATP synthase. Cytochrome c oxidase is the component of the respiratory chain that catalyzes the reduction of oxygen to water. Electrons originating from reduced cytochrome c in the intermembrane space (IMS) are transferred via the dinuclear copper A center (CU(A)) of subunit 2 and heme A of subunit 1 to the active site in subunit 1, a binuclear center (BNC) formed by heme A3 and copper B (CU(B)). The BNC reduces molecular oxygen to 2 water molecules using 4 electrons from cytochrome c in the IMS and 4 protons from the mitochondrial matrix. The polypeptide is Cytochrome c oxidase subunit 3 (COIII) (Heterololigo bleekeri (Spear squid)).